We begin with the raw amino-acid sequence, 165 residues long: Phosphopantetheine adenylyltransferase (165 aa).

Ser10 lines the substrate pocket. ATP-binding positions include Ser10–Phe11 and His18. Residues Lys42, Thr79, and Arg93 each contribute to the substrate site. Residues Gly94 to Arg96, Glu104, and Val129 to Thr135 each bind ATP.

This sequence belongs to the bacterial CoaD family. In terms of assembly, homohexamer. It depends on Mg(2+) as a cofactor.

The protein resides in the cytoplasm. The catalysed reaction is (R)-4'-phosphopantetheine + ATP + H(+) = 3'-dephospho-CoA + diphosphate. It participates in cofactor biosynthesis; coenzyme A biosynthesis; CoA from (R)-pantothenate: step 4/5. Reversibly transfers an adenylyl group from ATP to 4'-phosphopantetheine, yielding dephospho-CoA (dPCoA) and pyrophosphate. The sequence is that of Phosphopantetheine adenylyltransferase from Nitrobacter hamburgensis (strain DSM 10229 / NCIMB 13809 / X14).